Consider the following 244-residue polypeptide: 7-cyano-7-deazaguanine synthase (244 aa).

19 to 29 (FSGGQDSTTCL) contributes to the ATP binding site. Residues C207, C222, C225, and C228 each contribute to the Zn(2+) site.

Belongs to the QueC family. The cofactor is Zn(2+).

It catalyses the reaction 7-carboxy-7-deazaguanine + NH4(+) + ATP = 7-cyano-7-deazaguanine + ADP + phosphate + H2O + H(+). The protein operates within purine metabolism; 7-cyano-7-deazaguanine biosynthesis. Catalyzes the ATP-dependent conversion of 7-carboxy-7-deazaguanine (CDG) to 7-cyano-7-deazaguanine (preQ(0)). The polypeptide is 7-cyano-7-deazaguanine synthase (Bordetella avium (strain 197N)).